Consider the following 367-residue polypeptide: sn-glycerol-3-phosphate import ATP-binding protein UgpC (367 aa).

The 232-residue stretch at Leu4–Ile235 folds into the ABC transporter domain. Gly37–Ser44 is a binding site for ATP.

This sequence belongs to the ABC transporter superfamily. sn-glycerol-3-phosphate importer (TC 3.A.1.1.3) family. As to quaternary structure, the complex is composed of two ATP-binding proteins (UgpC), two transmembrane proteins (UgpA and UgpE) and a solute-binding protein (UgpB).

Its subcellular location is the cell inner membrane. The catalysed reaction is sn-glycerol 3-phosphate(out) + ATP + H2O = sn-glycerol 3-phosphate(in) + ADP + phosphate + H(+). Functionally, part of the ABC transporter complex UgpBAEC involved in sn-glycerol-3-phosphate (G3P) import. Responsible for energy coupling to the transport system. This chain is sn-glycerol-3-phosphate import ATP-binding protein UgpC, found in Cupriavidus metallidurans (strain ATCC 43123 / DSM 2839 / NBRC 102507 / CH34) (Ralstonia metallidurans).